Reading from the N-terminus, the 409-residue chain is Argininosuccinate synthase (409 aa).

Residues 12-20 (AYSGGLDTS) and Ala39 each bind ATP. The L-citrulline site is built by Tyr90 and Ser95. Gly120 contacts ATP. Residues Thr122, Asn126, and Asp127 each contribute to the L-aspartate site. Asn126 lines the L-citrulline pocket. L-citrulline is bound by residues Arg130, Ser181, Ser190, Glu266, and Tyr278.

It belongs to the argininosuccinate synthase family. Type 1 subfamily. In terms of assembly, homotetramer.

Its subcellular location is the cytoplasm. The catalysed reaction is L-citrulline + L-aspartate + ATP = 2-(N(omega)-L-arginino)succinate + AMP + diphosphate + H(+). It participates in amino-acid biosynthesis; L-arginine biosynthesis; L-arginine from L-ornithine and carbamoyl phosphate: step 2/3. This is Argininosuccinate synthase from Acidiphilium cryptum (strain JF-5).